Reading from the N-terminus, the 675-residue chain is Electrogenic aspartate/glutamate antiporter SLC25A13, mitochondrial (675 aa).

Ala2 is modified (N-acetylalanine). Positions 2-295 are regulatory N-terminal domain; it reads AAAKVALTKR…TLADIERIAP (294 aa). At 2 to 331 the chain is on the mitochondrial intermembrane side; sequence AAAKVALTKR…LLQVAESAYR (330 aa). 4 consecutive EF-hand domains span residues 51–86, 87–122, 125–157, and 158–193; these read SQPN…SVLC, APDA…TTIH, IPFN…FLLE, and IQLE…IRPH. Residues Asp66, Thr68, Asp70, Leu72, and Glu77 each coordinate Ca(2+). The linker loop domain stretch occupies residues 296–311; it reads LEEGTLPFNLAEAQRQ. Residues 321–612 form a carrier domain region; sequence VLLQVAESAY…LQRWFYIDFG (292 aa). Solcar repeat units follow at residues 326–418, 426–510, and 518–606; these read AESA…VRDK, VPLA…VKAS, and VSPG…LQRW. A helical membrane pass occupies residues 332-349; sequence FGLGSVAGAVGATAVYPI. The Mitochondrial matrix segment spans residues 350 to 392; that stretch reads DLVKTRMQNQRSTGSFVGELMYKNSFDCFKKVLRYEGFFGLYR. 2 positions are modified to N6-acetyllysine: Lys353 and Lys372. A helical transmembrane segment spans residues 393–412; that stretch reads GLLPQLLGVAPEKAIKLTVN. Over 413-435 the chain is Mitochondrial intermembrane; the sequence is DFVRDKFMHKDGSVPLAAEILAG. A helical membrane pass occupies residues 436 to 449; that stretch reads GCAGGSQVIFTNPL. Residues 450 to 484 lie on the Mitochondrial matrix side of the membrane; that stretch reads EIVKIRLQVAGEITTGPRVSALSVVRDLGFFGIYK. Lys453 is subject to N6-methyllysine. The residue at position 484 (Lys484) is an N6-acetyllysine; alternate. Lys484 is modified (N6-succinyllysine; alternate). The helical transmembrane segment at 485-504 threads the bilayer; that stretch reads GAKACFLRDIPFSAIYFPCY. At 505 to 523 the chain is on the mitochondrial intermembrane side; the sequence is AHVKASFANEDGQVSPGSL. Residues 524 to 541 traverse the membrane as a helical segment; sequence LLAGAIAGMPAASLVTPA. Topologically, residues 542–580 are mitochondrial matrix; that stretch reads DVIKTRLQVAARAGQTTYSGVIDCFRKILREEGPKALWK. Lys580 carries the N6-succinyllysine modification. Residues 581-600 form a helical membrane-spanning segment; the sequence is GAGARVFRSSPQFGVTLLTY. The Mitochondrial intermembrane segment spans residues 601-675; that stretch reads ELLQRWFYID…STSKAIGGGP (75 aa). A C-terminal domain region spans residues 613-675; that stretch reads GVKPMGSEPV…STSKAIGGGP (63 aa). Lys662 bears the N6-acetyllysine mark. The residue at position 666 (Ser666) is a Phosphoserine.

It belongs to the mitochondrial carrier (TC 2.A.29) family. In terms of assembly, homodimer (via N-terminus). In terms of tissue distribution, high levels in liver and low levels in kidney, pancreas, placenta, heart and brain.

Its subcellular location is the mitochondrion inner membrane. It catalyses the reaction L-aspartate(in) + L-glutamate(out) + H(+)(out) = L-aspartate(out) + L-glutamate(in) + H(+)(in). It carries out the reaction 3-sulfino-L-alanine(out) + L-glutamate(in) + H(+)(in) = 3-sulfino-L-alanine(in) + L-glutamate(out) + H(+)(out). The catalysed reaction is 3-sulfino-L-alanine(out) + L-aspartate(in) = 3-sulfino-L-alanine(in) + L-aspartate(out). Its activity is regulated as follows. Activated by calcium-binding in the mitochondrial intermembrane space. Inhibited by pyridoxal 5'-phosphate, bathophenathroline, mercurials, diethyl pyrocarbonate and N-ethylmaleimide. Its function is as follows. Mitochondrial electrogenic aspartate/glutamate antiporter that favors efflux of aspartate and entry of glutamate and proton within the mitochondria as part of the malate-aspartate shuttle. Also mediates the uptake of L-cysteinesulfinate (3-sulfino-L-alanine) by mitochondria in exchange of L-glutamate and proton. Can also exchange L-cysteinesulfinate with aspartate in their anionic form without any proton translocation. Lacks transport activity towards gamma-aminobutyric acid (GABA). The chain is Electrogenic aspartate/glutamate antiporter SLC25A13, mitochondrial from Homo sapiens (Human).